A 130-amino-acid chain; its full sequence is MTLLDPLANALSHITNSERVGKKEVYIKPASKLIGEVLRVMQENGYIGEFEFIDDGRAGIYRVQLIGKINKAGAIKPRFPVKAREYEAWEKRFLPAFEFGILIVSTSQGVMTHKEAIEKGIGGRLIAYVY.

The protein belongs to the universal ribosomal protein uS8 family. As to quaternary structure, part of the 30S ribosomal subunit.

Its function is as follows. One of the primary rRNA binding proteins, it binds directly to 16S rRNA central domain where it helps coordinate assembly of the platform of the 30S subunit. The chain is Small ribosomal subunit protein uS8 from Thermococcus onnurineus (strain NA1).